The sequence spans 275 residues: Small ribosomal subunit protein uS3 (275 aa).

Residues 38–106 enclose the KH type-2 domain; sequence IRRLLSSGLE…QVQLNILEVK (69 aa). The interval 217–275 is disordered; that stretch reads AVPAGADRPRRERPAGSRPRRSGASGTTATGTEAGRAVGSEEPAAAESATTPEAQSTES. Low complexity predominate over residues 238–275; sequence SGASGTTATGTEAGRAVGSEEPAAAESATTPEAQSTES.

It belongs to the universal ribosomal protein uS3 family. Part of the 30S ribosomal subunit. Forms a tight complex with proteins S10 and S14.

Functionally, binds the lower part of the 30S subunit head. Binds mRNA in the 70S ribosome, positioning it for translation. In Mycobacterium marinum (strain ATCC BAA-535 / M), this protein is Small ribosomal subunit protein uS3.